A 655-amino-acid polypeptide reads, in one-letter code: MYNAISLIIILPCISWLFPLFFGRQLGYVFVTRMTSTLIIITTLITYYYFYQLLGNNNPINLELFNYLNIDYLDINYNFEIDALTITMLLAITTISSMVHIYSIGYMETDPHQVRFFSLLSMFTFWMIILVTGSNYFVLFVGWEFIGVTSYLLISFWVTRLQAMKSALSAVLMNRFGDAFFVLGLCVIAYVFGTLNYSTIFATAYLINTDLLVLIMLALFIAAMAKSAQFGLHNWLTLAMEGPTPVSSLLHAATLVTAGIYLLLRSANILEYTPTVLFIILWIGALTTLSAGLIAICSNDLKRIIALSTMSQLGMMTIAIGLSAYNLALFHLLGHAFFKALLFMSAGSIIHSILNESQDIRTYGGLLSYLPYTYICITIASLSLMAMPGLTGYYTKDIIIESTYGSYSISNYVVYWIAYLSAVLTCVYSMKILYLTFYSNPNNNTITYYNAHESNIYITLPMFILAIFAMFAGWILKDIYLGVGTDFVGTHILPNNFSYFDTEFSITQFYKLLPLISAILVSILIVVLNEFFAIVFNLNNKYINTVYSIFNQKLVSDQILNHFIIFKGLVTSGNIAHHVDKGSLYRLGPVGINRLLNKASYNVINLSSNTRSSLSMNSMLILITIVSLLLLVLVMNVNFIIVIPVLISILYILFS.

16 helical membrane passes run 3-23 (NAIS…LFFG), 34-54 (MTST…YQLL), 84-104 (LTIT…IYSI), 116-136 (FFSL…GSNY), 137-157 (FVLF…ISFW), 180-200 (FFVL…YSTI), 204-224 (AYLI…IAAM), 244-264 (TPVS…YLLL), 276-296 (VLFI…LIAI), 304-322 (IIAL…AIGL), 332-354 (LLGH…HSIL), 370-390 (LPYT…MPGL), 413-433 (VVYW…MKIL), 456-476 (IYIT…GWIL), 516-536 (ISAI…AIVF), and 629-649 (LLLV…LISI).

The protein belongs to the complex I subunit 5 family. As to quaternary structure, complex I is composed of 37 different subunits.

The protein localises to the mitochondrion inner membrane. It catalyses the reaction a ubiquinone + NADH + 5 H(+)(in) = a ubiquinol + NAD(+) + 4 H(+)(out). Core subunit of the mitochondrial membrane respiratory chain NADH dehydrogenase (Complex I) that is believed to belong to the minimal assembly required for catalysis. Complex I functions in the transfer of electrons from NADH to the respiratory chain. The immediate electron acceptor for the enzyme is believed to be ubiquinone. This is NADH-ubiquinone oxidoreductase chain 5 (ND5) from Yarrowia lipolytica (strain CLIB 122 / E 150) (Yeast).